Here is a 455-residue protein sequence, read N- to C-terminus: Tyramine receptor Ser-2 (455 aa).

Residues 1-60 (MFRNYTDSVQEMVLRAIDSIRDSVINASSAVSTTTLPPLDIPMTSMKPPSIIPTVELVLG) are Extracellular-facing. Residues N4 and N26 are each glycosylated (N-linked (GlcNAc...) asparagine). Residues 61-83 (TITYLVIIAMTVVGNTLVVVAVF) traverse the membrane as a helical segment. At 84–93 (SYRPLKKVQN) the chain is on the cytoplasmic side. A helical transmembrane segment spans residues 94-115 (YFLVSLAASDLAVAIFVMPLHV). Topologically, residues 116 to 133 (VTFLAGGKWLLGVTVCQF) are extracellular. C131 and C209 are joined by a disulfide. The chain crosses the membrane as a helical span at residues 134–154 (FTTADILLCTSSILNLCAIAL). Over 155 to 174 (DRYWAIHNPINYAQKRTTKF) the chain is Cytoplasmic. The helical transmembrane segment at 175–197 (VCIVIVIVWILSMLISVPPIIGW) threads the bilayer. Over 198–221 (NNWQENMMEDSCGLSTEKAFVVFS) the chain is Extracellular. Residues 222–243 (AAGSFFLPLLVMVVVYVKIFIS) traverse the membrane as a helical segment. Over 244 to 370 (ARQRIRTNRG…VAKEKRAAKT (127 aa)) the chain is Cytoplasmic. Residues 371 to 392 (IAVIIFVFSFCWLPFFVAYVIR) form a helical membrane-spanning segment. At 393–407 (PFCETCKLHAKVEQA) the chain is on the extracellular side. A helical transmembrane segment spans residues 408 to 428 (FTWLGYINSSLNPFLYGILNL). Residues 429 to 455 (EFRRAFKKILCPKAVLEQRRRRMSAQP) are Cytoplasmic-facing.

This sequence belongs to the G-protein coupled receptor 1 family. As to expression, the different isoforms are expressed in specific, but overlapping sets of sensory, inter- and motor neurons, including AIY, AIZ and RIA interneurons. They are also expressed in pharyngeal cells, head muscles and excretory gland cells.

Its subcellular location is the cell membrane. Its function is as follows. G-protein coupled receptor for tyramine, a known neurotransmitter and neuromodulator and direct precursor of octopamine. The rank order of potency is tyramine &gt; octopamine &gt; dopamine &gt; serotonin &gt; epinephrine = norepinephrine. This is Tyramine receptor Ser-2 (ser-2) from Caenorhabditis elegans.